A 2491-amino-acid chain; its full sequence is Cation-independent mannose-6-phosphate receptor (2491 aa).

An N-terminal signal peptide occupies residues M1–A40. Residues Q41–Q2304 are Lumenal-facing. MRH domains follow at residues E47–K163, V172–R320, K326–K468, L473–L619, E625–E762, L765–I924, Q932–P1079, V1082–V1219, D1225–P1363, T1367–M1508, D1514–Q1648, and T1650–D1797. 2 disulfide bridges follow: C49/C69 and C77/C84. A glycan (N-linked (GlcNAc...) asparagine) is linked at N112. Disulfide bonds link C117/C149, C134/C161, C174/C212, C228/C235, C275/C306, C288/C318, C328/C366, and C374/C382. N400 and N435 each carry an N-linked (GlcNAc...) asparagine glycan. Intrachain disulfides connect C420-C454, C434-C466, C475-C519, and C531-C538. 2 N-linked (GlcNAc...) asparagine glycosylation sites follow: N543 and N581. 2 disulfide bridges follow: C572-C605 and C586-C617. Residue N626 is glycosylated (N-linked (GlcNAc...) asparagine). 5 disulfide bridges follow: C627/C664, C672/C679, C731/C760, C767/C814, and C823/C830. Residue N747 is glycosylated (N-linked (GlcNAc...) asparagine). N871 carries an N-linked (GlcNAc...) asparagine glycan. 7 disulfides stabilise this stretch: C875-C910, C893-C922, C934-C970, C976-C987, C1042-C1077, C1084-C1125, and C1134-C1142. N951 and N957 each carry an N-linked (GlcNAc...) asparagine glycan. N-linked (GlcNAc...) asparagine glycosylation is present at N1164. 4 disulfides stabilise this stretch: C1177–C1205, C1190–C1217, C1227–C1262, and C1270–C1282. N-linked (GlcNAc...) asparagine glycosylation occurs at N1246. N1312 is a glycosylation site (N-linked (GlcNAc...) asparagine). 24 disulfides stabilise this stretch: C1319-C1349, C1333-C1361, C1369-C1408, C1420-C1427, C1461-C1494, C1476-C1506, C1516-C1553, C1559-C1566, C1598-C1634, C1614-C1646, C1652-C1695, C1706-C1713, C1750-C1783, C1766-C1795, C1804-C1839, C1850-C1856, C1893-C1975, C1903-C1927, C1917-C1942, C1957-C1987, C1994-C2029, C2039-C2046, C2082-C2113, and C2096-C2125. N-linked (GlcNAc...) asparagine glycosylation occurs at N1656. N-linked (GlcNAc...) asparagine glycosylation occurs at N1757. One can recognise a Fibronectin type-II domain in the interval D1802 to P1989. Residue N1816 is glycosylated (N-linked (GlcNAc...) asparagine). 2 consecutive MRH domains span residues L1992–V2127 and V2135–L2280. The N-linked (GlcNAc...) asparagine glycan is linked to N2085. N2136 carries an N-linked (GlcNAc...) asparagine glycan. 3 cysteine pairs are disulfide-bonded: C2188–C2194, C2232–C2266, and C2248–C2278. The helical transmembrane segment at A2305–Y2327 threads the bilayer. Topologically, residues K2328 to I2491 are cytoplasmic. K2352 carries the N6-acetyllysine modification. S2409 is subject to Phosphoserine. The tract at residues G2424 to I2491 is disordered. R2425 is modified (omega-N-methylarginine). Over residues Q2444–A2459 the composition is skewed to basic and acidic residues. The segment covering S2464–L2477 has biased composition (polar residues). Phosphoserine is present on residues S2479 and S2484. A compositionally biased stretch (basic and acidic residues) spans S2479 to I2491.

Belongs to the MRL1/IGF2R family. Binds HA-I and HA-II plasma membrane adapters. Interacts with DPP4; the interaction is direct. Binds GGA1, GGA2 and GGA3. Interacts with the heterotrimeric retromer cargo-selective complex (CSC), formed by VPS26 (VPS26A or VPS26B), VPS29 and VPS35; which is involved in retrograde trafficking of the receptor from endosomes to the Golgi apparatus. In terms of processing, palmitoylated. Undergoes cysteine S-palmitoylation which promotes interaction with the retromer cargo-selective complex which mediates its retrograde trafficking to the Golgi apparatus.

The protein resides in the golgi apparatus membrane. Its subcellular location is the endosome membrane. In terms of biological role, mediates the transport of phosphorylated lysosomal enzymes from the Golgi complex and the cell surface to lysosomes. Lysosomal enzymes bearing phosphomannosyl residues bind specifically to mannose-6-phosphate receptors in the Golgi apparatus and the resulting receptor-ligand complex is transported to an acidic prelysosomal compartment where the low pH mediates the dissociation of the complex. The receptor is then recycled back to the Golgi for another round of trafficking through its binding to the retromer. This receptor also binds IGF2. Acts as a positive regulator of T-cell coactivation by binding DPP4. The protein is Cation-independent mannose-6-phosphate receptor (IGF2R) of Homo sapiens (Human).